The following is a 449-amino-acid chain: UNC93-like protein MFSD11 (449 aa).

Residues Leu-8–Cys-28 form a helical membrane-spanning segment. An N-linked (GlcNAc...) asparagine glycan is attached at Asn-40. The next 5 membrane-spanning stretches (helical) occupy residues Ala-53 to Val-73, Gly-74 to Ile-94, Pro-96 to Trp-116, Ile-138 to Trp-158, and Arg-170 to Ile-190. Ser-204 carries the post-translational modification Phosphoserine. 6 helical membrane passes run Met-239 to Val-259, Leu-277 to Gly-297, Pro-309 to Met-329, Phe-359 to Leu-379, Ala-385 to Tyr-405, and Leu-410 to Phe-430.

This sequence belongs to the unc-93 family.

The protein resides in the membrane. In Homo sapiens (Human), this protein is UNC93-like protein MFSD11 (MFSD11).